A 113-amino-acid chain; its full sequence is Non-specific lipid-transfer protein (113 aa).

Residues 1 to 24 (AQVMLMAVALVLMLAAVPRAAVAI) form the signal peptide. Disulfide bonds link cysteine 26–cysteine 73, cysteine 36–cysteine 50, cysteine 51–cysteine 96, and cysteine 71–cysteine 110. Aspartate 30 carries the Cis-14-hydroxy-10,13-dioxo-7-heptadecenoic acid aspartate ester lipid modification.

The protein belongs to the plant LTP family.

Functionally, plant non-specific lipid-transfer proteins transfer phospholipids as well as galactolipids across membranes. May play a role in wax or cutin deposition in the cell walls of expanding epidermal cells and certain secretory tissues. The sequence is that of Non-specific lipid-transfer protein from Triticum aestivum (Wheat).